A 666-amino-acid polypeptide reads, in one-letter code: Transketolase (666 aa).

Residue His26 coordinates substrate. Thiamine diphosphate-binding positions include His66 and 114–116 (GPL). Asp155 lines the Mg(2+) pocket. Thiamine diphosphate contacts are provided by Gly156 and Asn185. 2 residues coordinate Mg(2+): Asn185 and Ile187. The substrate site is built by His261, Arg358, and Ser385. Residue His261 participates in thiamine diphosphate binding. Glu411 functions as the Proton donor in the catalytic mechanism. Phe437 contacts thiamine diphosphate. Substrate contacts are provided by His461, Asp469, and Arg520.

Belongs to the transketolase family. In terms of assembly, homodimer. Mg(2+) is required as a cofactor. The cofactor is Ca(2+). Requires Mn(2+) as cofactor. Co(2+) serves as cofactor. It depends on thiamine diphosphate as a cofactor.

It carries out the reaction D-sedoheptulose 7-phosphate + D-glyceraldehyde 3-phosphate = aldehydo-D-ribose 5-phosphate + D-xylulose 5-phosphate. Catalyzes the transfer of a two-carbon ketol group from a ketose donor to an aldose acceptor, via a covalent intermediate with the cofactor thiamine pyrophosphate. This Buchnera aphidicola subsp. Baizongia pistaciae (strain Bp) protein is Transketolase (tkt).